Reading from the N-terminus, the 525-residue chain is Beta-1,4-xylosyltransferase IRX14 (525 aa).

Over 1-35 (MKLSALHQSYLNRRSNSFRSPTSLDSSVDGSGKSL) the chain is Cytoplasmic. Residues 36–56 (IAVFWLILHCLCCLISLVLGF) traverse the membrane as a helical; Signal-anchor for type II membrane protein segment. Residues 57–525 (RFSRLVFFFL…SSSSKHQERN (469 aa)) are Lumenal-facing. Residues Asn-102, Asn-204, and Asn-326 are each glycosylated (N-linked (GlcNAc...) asparagine). The tract at residues 452–525 (RTPWPDVPPE…SSSSKHQERN (74 aa)) is disordered. Polar residues predominate over residues 471–488 (PLSQGNTVVVIPKQQQHP). Positions 489–503 (TKIRKPKRKSKKSKH) are enriched in basic residues. The segment covering 508–519 (TDTTTQVYSSSS) has biased composition (polar residues).

The protein belongs to the glycosyltransferase 43 family. In terms of tissue distribution, expressed in developing interfascicular fibers and xylem cells in stems and developing secondary xylem in roots.

The protein localises to the golgi apparatus membrane. The enzyme catalyses [(1-&gt;4)-beta-D-xylan](n) + UDP-alpha-D-xylose = [(1-&gt;4)-beta-D-xylan](n+1) + UDP + H(+). Involved in the synthesis of the hemicellulose glucuronoxylan, a major component of secondary cell walls. Involved in the elongation of glucuronoxylan xylosyl backbone. Xylan xylosyltransferase that acts cooperatively with IRX9 to achieve the successive addition of xylosyl residues during xylan backbone elongation. Required for the proper composition and structural properties of released seed coat mucilage. Required for the production of highly branched xylan polymers in seed coat mucilage. Xylan with xylose side chains seems to be necessary for pectin attachment to the seed surface. Together with MUCI70, required for xylan and pectin synthesis in seed coat epidermal (SCE) cells. This chain is Beta-1,4-xylosyltransferase IRX14, found in Arabidopsis thaliana (Mouse-ear cress).